The following is a 322-amino-acid chain: NADH-quinone oxidoreductase subunit H (322 aa).

8 consecutive transmembrane segments (helical) span residues 12–32, 79–99, 111–131, 151–171, 183–203, 234–254, 262–282, and 301–321; these read IGKA…MSFI, IFIL…AVVP, VGLL…LFAG, LSYE…TGSF, LWNV…GVAV, FFVG…TLFF, LPPF…FILL, and VCLP…LMNV.

This sequence belongs to the complex I subunit 1 family. NDH-1 is composed of 13 different subunits. Subunits NuoA, H, J, K, L, M, N constitute the membrane sector of the complex.

It is found in the cell inner membrane. The enzyme catalyses a quinone + NADH + 5 H(+)(in) = a quinol + NAD(+) + 4 H(+)(out). Functionally, NDH-1 shuttles electrons from NADH, via FMN and iron-sulfur (Fe-S) centers, to quinones in the respiratory chain. The immediate electron acceptor for the enzyme in this species is believed to be ubiquinone. Couples the redox reaction to proton translocation (for every two electrons transferred, four hydrogen ions are translocated across the cytoplasmic membrane), and thus conserves the redox energy in a proton gradient. This subunit may bind ubiquinone. The polypeptide is NADH-quinone oxidoreductase subunit H (Shewanella oneidensis (strain ATCC 700550 / JCM 31522 / CIP 106686 / LMG 19005 / NCIMB 14063 / MR-1)).